Reading from the N-terminus, the 138-residue chain is MAPK kinase substrate protein At1g80180 (138 aa).

The disordered stretch occupies residues Thr52 to Arg138. The segment covering Lys69–Arg81 has biased composition (basic and acidic residues). Ser98 bears the Phosphoserine mark. Residue Ser105 is modified to Phosphoserine; by MAPK6. Residues Gln121–Arg138 are compositionally biased toward basic residues.

As to expression, expressed in developing cotyledons, mature cotyledons, cotyledon epidermis and stomata.

In terms of biological role, may play a role in the regulation of stomata patterning. The chain is MAPK kinase substrate protein At1g80180 from Arabidopsis thaliana (Mouse-ear cress).